Consider the following 946-residue polypeptide: ATP-dependent 6-phosphofructokinase subunit beta (946 aa).

Positions 1–559 are N-terminal catalytic PFK domain 1; sequence MISIVNGTST…HLANFMAMNT (559 aa). ATP is bound by residues glycine 192, 256-257, and 286-289; these read RC and GDGS. A Mg(2+)-binding site is contributed by aspartate 287. Beta-D-fructose 6-phosphate contacts are provided by residues 332–334, arginine 369, 376–378, glutamate 433, arginine 461, and 467–470; these read SID, MGR, and HVQR. Catalysis depends on aspartate 334, which acts as the Proton acceptor. The interval 560–573 is interdomain linker; sequence ANHEKPTLPREKRK. Residues 574–946 are C-terminal regulatory PFK domain 2; sequence KIAIINIGAP…LVGRTRLDKP (373 aa). Beta-D-fructose 2,6-bisphosphate-binding positions include arginine 644, 702–706, 747–749, lysine 833, 839–842, and arginine 920; these read TISNN, QGG, and HVQQ.

This sequence belongs to the phosphofructokinase type A (PFKA) family. ATP-dependent PFK group I subfamily. Eukaryotic two domain clade 'E' sub-subfamily. In terms of assembly, heterooctamer of 4 alpha and 4 beta chains. Mg(2+) is required as a cofactor.

Its subcellular location is the cytoplasm. The enzyme catalyses beta-D-fructose 6-phosphate + ATP = beta-D-fructose 1,6-bisphosphate + ADP + H(+). The protein operates within carbohydrate degradation; glycolysis; D-glyceraldehyde 3-phosphate and glycerone phosphate from D-glucose: step 3/4. With respect to regulation, allosterically activated by ADP, AMP, or fructose 2,6-bisphosphate, and allosterically inhibited by ATP or citrate. Its function is as follows. Catalyzes the phosphorylation of D-fructose 6-phosphate to fructose 1,6-bisphosphate by ATP, the first committing step of glycolysis. This Candida albicans (Yeast) protein is ATP-dependent 6-phosphofructokinase subunit beta (PFK2).